A 42-amino-acid polypeptide reads, in one-letter code: Osteocalcin (42 aa).

The Gla domain maps to 1-40; it reads YLDHGLGAPAPYVDPLEPKREVDELADQMGFQEAYRRFYG. Proline 9 carries the post-translational modification 4-hydroxyproline. Residues glutamate 17, glutamate 21, and aspartate 23 each contribute to the Ca(2+) site. 4-carboxyglutamate occurs at positions 17 and 21.

The protein belongs to the osteocalcin/matrix Gla protein family. Gamma-carboxyglutamic acid residues are formed by vitamin K dependent carboxylation. These residues are essential for the binding of calcium.

The protein localises to the secreted. Functionally, the carboxylated form is one of the main organic components of the bone matrix, which constitutes 1-2% of the total bone protein: it acts as a negative regulator of bone formation and is required to limit bone formation without impairing bone resorption or mineralization. The carboxylated form binds strongly to apatite and calcium. Its function is as follows. The uncarboxylated form acts as a hormone secreted by osteoblasts, which regulates different cellular processes, such as energy metabolism, male fertility and brain development. Regulates of energy metabolism by acting as a hormone favoring pancreatic beta-cell proliferation, insulin secretion and sensitivity and energy expenditure. Uncarboxylated osteocalcin hormone also promotes testosterone production in the testes: acts as a ligand for G protein-coupled receptor GPRC6A at the surface of Leydig cells, initiating a signaling response that promotes the expression of enzymes required for testosterone synthesis in a CREB-dependent manner. Also acts as a regulator of brain development: osteocalcin hormone crosses the blood-brain barrier and acts as a ligand for GPR158 on neurons, initiating a signaling response that prevents neuronal apoptosis in the hippocampus, favors the synthesis of all monoamine neurotransmitters and inhibits that of gamma-aminobutyric acid (GABA). Osteocalcin also crosses the placenta during pregnancy and maternal osteocalcin is required for fetal brain development. The protein is Osteocalcin of Camelops hesternus (Western camel).